Reading from the N-terminus, the 240-residue chain is Lactate utilization protein C (240 aa).

This sequence belongs to the LutC/YkgG family.

In terms of biological role, is involved in L-lactate degradation and allows cells to grow with lactate as the sole carbon source. This is Lactate utilization protein C from Geobacillus kaustophilus (strain HTA426).